Reading from the N-terminus, the 788-residue chain is Leucine-rich repeat and fibronectin type-III domain-containing protein 2 (788 aa).

The signal sequence occupies residues 1 to 20; the sequence is METLLGGLLAFGMAFAVVDA. Positions 21–52 constitute an LRRNT domain; it reads CPKYCVCQNLSESLGTLCPSKGLLFVPPDIDR. Residues 21–534 lie on the Extracellular side of the membrane; sequence CPKYCVCQNL…MHSQILGGTM (514 aa). A glycan (N-linked (GlcNAc...) asparagine) is linked at Asn-29. LRR repeat units follow at residues 53–74, 77–98, 101–122, 125–146, 150–171, 174–195, and 198–219; these read RTVE…DFAN, GLVD…SFLD, SLRS…TLRG, NLQH…AFED, TLED…SVRR, NLHQ…TFAD, and KLAR…PIFA. One can recognise an LRRCT domain in the interval 242–288; the sequence is NPLHCNCELLWLRRLERDDDLETCGSPGSLKGRYFWHIREEEFVCEP. Positions 289 to 375 constitute an Ig-like domain; it reads PLITQHTHKL…GEATATVEVS (87 aa). A disulfide bridge links Cys-310 with Cys-359. 3 N-linked (GlcNAc...) asparagine glycosylation sites follow: Asn-332, Asn-341, and Asn-384. Positions 383–423 are disordered; that stretch reads SNSTSRMAPPKSRLSDITGSSKTSRGGGGSGAGEPPKSTPE. A Fibronectin type-III domain is found at 422 to 518; the sequence is PERAVLVSDV…GCAQFFTKAD (97 aa). A helical membrane pass occupies residues 535 to 555; that stretch reads ILVIGGIIVATLLVFIVILMV. The Cytoplasmic portion of the chain corresponds to 556-788; the sequence is RYKVCNHDTP…SSEWVMESTV (233 aa). Over residues 620 to 631 the composition is skewed to low complexity; the sequence is CDSSSSSSLGSG. Disordered stretches follow at residues 620–655 and 668–711; these read CDSS…PSLD and SQRK…RSLL. The span at 642 to 651 shows a compositional bias: pro residues; it reads RLPPPAPRPK. The short motif at 785 to 788 is the PDZ-binding element; the sequence is ESTV.

It belongs to the LRFN family. As to quaternary structure, forms heteromeric complexes with LRFN1, LRFN3, LRFN4 and LRFN5. Can form homomeric complexes, but not across cell junctions. Interacts with DLG4. Directly interacts with DLG1, DLG2 and DLG3. Directly interacts with 2 NMDA receptor subunits GRIN1 and GRIN2A. In terms of processing, glycosylated. In terms of tissue distribution, predominantly expressed in the brain, with a weak, but broad expression in the cerebral cortex and diencephalic nuclei. Strongly expressed in both the pyramidal layer and the dentate gyrus of the hippocampus. Also detected in other parts of the central nervous system, including the olfactory bulb, pons, cerebellum, and medulla oblongata, as well as in the peripheral nervous system, such as the ganglia of cranial nerves and the dorsal root ganglion during gestation.

The protein localises to the membrane. It localises to the synapse. Its subcellular location is the postsynaptic cell membrane. Promotes neurite outgrowth in hippocampal neurons. Enhances the cell surface expression of 2 NMDA receptor subunits GRIN1 and GRIN2A. May play a role in redistributing DLG4 to the cell periphery. In Mus musculus (Mouse), this protein is Leucine-rich repeat and fibronectin type-III domain-containing protein 2 (Lrfn2).